Reading from the N-terminus, the 166-residue chain is Urease accessory protein UreE 2 (166 aa).

The segment at 133–156 is disordered; sequence QPEHGAYGGGHHHSRAGEEDFNYP.

It belongs to the UreE family.

It localises to the cytoplasm. Its function is as follows. Involved in urease metallocenter assembly. Binds nickel. Probably functions as a nickel donor during metallocenter assembly. The protein is Urease accessory protein UreE 2 of Pseudomonas syringae pv. tomato (strain ATCC BAA-871 / DC3000).